The following is a 499-amino-acid chain: Protein-tyrosine sulfotransferase (499 aa).

Residues Met1–Lys9 lie on the Cytoplasmic side of the membrane. A helical; Signal-anchor for type II membrane protein membrane pass occupies residues Val10–Glu30. At Leu31 to Thr499 the chain is on the lumenal side. Residue Arg80–Thr84 participates in 3'-phosphoadenylyl sulfate binding. A disulfide bridge links Cys98 with Cys158. Glu101 functions as the Proton donor/acceptor in the catalytic mechanism. Positions Arg103 to Arg107 are interaction with peptide substrate. The 3'-phosphoadenylyl sulfate site is built by Arg185, Ser193, and Arg197. Cys227 and Cys235 are oxidised to a cystine. Residues Tyr240, Ser287 to Asn296, and Lys302 contribute to the 3'-phosphoadenylyl sulfate site. Residues Asn346 and Asn380 are each glycosylated (N-linked (GlcNAc...) asparagine). 2 disordered regions span residues Lys362–Lys460 and Asn476–Thr499. 2 stretches are compositionally biased toward low complexity: residues Thr375–Glu400 and His408–Gln434. Positions Glu443–Lys460 are enriched in basic and acidic residues. The span at Asn476–Ile491 shows a compositional bias: low complexity.

It belongs to the protein sulfotransferase family.

The protein resides in the golgi apparatus membrane. The catalysed reaction is L-tyrosyl-[protein] + 3'-phosphoadenylyl sulfate = O-sulfo-L-tyrosine-[protein] + adenosine 3',5'-bisphosphate + H(+). In terms of biological role, catalyzes the O-sulfation of tyrosine residues within acidic motifs of polypeptides. Has a role in protein secretion. This is Protein-tyrosine sulfotransferase from Drosophila melanogaster (Fruit fly).